We begin with the raw amino-acid sequence, 29 residues long: Glucagon (29 aa).

It belongs to the glucagon family.

Its subcellular location is the secreted. Its function is as follows. Glucagon plays a key role in glucose metabolism and homeostasis. Regulates blood glucose by increasing gluconeogenesis and decreasing glycolysis. The polypeptide is Glucagon (GCG) (Meleagris gallopavo (Wild turkey)).